The primary structure comprises 570 residues: Sulfite reductase [NADPH] hemoprotein beta-component (570 aa).

4 residues coordinate [4Fe-4S] cluster: Cys-434, Cys-440, Cys-479, and Cys-483. Cys-483 lines the siroheme pocket.

This sequence belongs to the nitrite and sulfite reductase 4Fe-4S domain family. Alpha(8)-beta(8). The alpha component is a flavoprotein, the beta component is a hemoprotein. Siroheme serves as cofactor. Requires [4Fe-4S] cluster as cofactor.

It carries out the reaction hydrogen sulfide + 3 NADP(+) + 3 H2O = sulfite + 3 NADPH + 4 H(+). It functions in the pathway sulfur metabolism; hydrogen sulfide biosynthesis; hydrogen sulfide from sulfite (NADPH route): step 1/1. Component of the sulfite reductase complex that catalyzes the 6-electron reduction of sulfite to sulfide. This is one of several activities required for the biosynthesis of L-cysteine from sulfate. This is Sulfite reductase [NADPH] hemoprotein beta-component from Shigella flexneri serotype 5b (strain 8401).